Here is a 337-residue protein sequence, read N- to C-terminus: RNA 3'-terminal phosphate cyclase (337 aa).

ATP is bound by residues glutamine 101 and 282 to 285 (HMSD). The active-site Tele-AMP-histidine intermediate is histidine 306.

The protein belongs to the RNA 3'-terminal cyclase family. Type 1 subfamily.

It localises to the cytoplasm. It carries out the reaction a 3'-end 3'-phospho-ribonucleotide-RNA + ATP = a 3'-end 2',3'-cyclophospho-ribonucleotide-RNA + AMP + diphosphate. Catalyzes the conversion of 3'-phosphate to a 2',3'-cyclic phosphodiester at the end of RNA. The mechanism of action of the enzyme occurs in 3 steps: (A) adenylation of the enzyme by ATP; (B) transfer of adenylate to an RNA-N3'P to produce RNA-N3'PP5'A; (C) and attack of the adjacent 2'-hydroxyl on the 3'-phosphorus in the diester linkage to produce the cyclic end product. The biological role of this enzyme is unknown but it is likely to function in some aspects of cellular RNA processing. This Saccharolobus islandicus (strain M.16.27) (Sulfolobus islandicus) protein is RNA 3'-terminal phosphate cyclase.